A 329-amino-acid chain; its full sequence is uncharacterized protein (329 aa).

Residues 56-247 are a coiled coil; sequence LNKEEQFQED…EAEKTHQAKL (192 aa).

This is an uncharacterized protein from Bos taurus (Bovine).